Reading from the N-terminus, the 795-residue chain is RINT1-like protein MAG2 (795 aa).

Residues 35–64 adopt a coiled-coil conformation; sequence TGLVSELQTEISELDQRLAGLNRQLESGLA. The segment at 91–111 is disordered; the sequence is TSVTRSASDSGKEEEATEHVA. Residues 100–111 are compositionally biased toward basic and acidic residues; that stretch reads SGKEEEATEHVA. Residues 207 to 795 form the RINT1/TIP20 domain; sequence ALAMMRPQAI…KKVAKSRVFS (589 aa).

Belongs to the RINT1 family. As to quaternary structure, interacts with SEC20 and SYP81. Interacts with ZW10 (via the central region). Forms a complex with ZW10/MIP1, MIP2 and MIP3 on the endoplasmic reticulum. As to expression, highly expressed in dry seeds. Expressed at low levels in roots, rosette and cauline leaves, stems and flowers.

The protein localises to the endoplasmic reticulum membrane. Functionally, functions in the anterograde transport of storage protein precursors from the endoplasmic reticulum (ER) to the Golgi complex and in the retrograde transport from the Golgi complex to the ER. Forms a complex with ZW10/MIP1, MIP2 and MIP3 on the ER that may be responsible for efficient transport of seed storage proteins. Required for the responses to environmental stresses during seed germination and vegetative growth. Probably not involved in the retrograde transport from the ER to the apoplast. The protein is RINT1-like protein MAG2 of Arabidopsis thaliana (Mouse-ear cress).